A 92-amino-acid polypeptide reads, in one-letter code: Cell division topological specificity factor (92 aa).

Belongs to the MinE family.

Its function is as follows. Prevents the cell division inhibition by proteins MinC and MinD at internal division sites while permitting inhibition at polar sites. This ensures cell division at the proper site by restricting the formation of a division septum at the midpoint of the long axis of the cell. The protein is Cell division topological specificity factor of Colwellia psychrerythraea (strain 34H / ATCC BAA-681) (Vibrio psychroerythus).